The primary structure comprises 187 residues: Transmembrane protein 17A (187 aa).

Helical transmembrane passes span 49-69, 82-102, 114-134, and 146-166; these read IFLY…VIML, FILV…LYLG, LAGF…FLLC, and AVHG…IFAL.

It belongs to the TMEM17 family. Part of the tectonic-like complex (also named B9 complex).

It is found in the cell projection. The protein resides in the cilium membrane. In terms of biological role, transmembrane component of the tectonic-like complex, a complex localized at the transition zone of primary cilia and acting as a barrier that prevents diffusion of transmembrane proteins between the cilia and plasma membranes. Required for ciliogenesis and sonic hedgehog/SHH signaling. This Xenopus tropicalis (Western clawed frog) protein is Transmembrane protein 17A (tmem17-a).